Here is a 576-residue protein sequence, read N- to C-terminus: Arginine--tRNA ligase (576 aa).

Residues 122 to 132 carry the 'HIGH' region motif; it reads PNVAKQMHVGH.

This sequence belongs to the class-I aminoacyl-tRNA synthetase family. As to quaternary structure, monomer.

It is found in the cytoplasm. The catalysed reaction is tRNA(Arg) + L-arginine + ATP = L-arginyl-tRNA(Arg) + AMP + diphosphate. The protein is Arginine--tRNA ligase of Yersinia pseudotuberculosis serotype O:3 (strain YPIII).